The sequence spans 294 residues: Shikimate dehydrogenase (NADP(+)) (294 aa).

Shikimate is bound by residues S23–S25 and T70. K74 (proton acceptor) is an active-site residue. Shikimate contacts are provided by N95 and D110. Residues G135–A139, N159–R164, and M232 each bind NADP(+). Residue Y234 participates in shikimate binding. Residue G255 participates in NADP(+) binding.

The protein belongs to the shikimate dehydrogenase family. In terms of assembly, homodimer.

It catalyses the reaction shikimate + NADP(+) = 3-dehydroshikimate + NADPH + H(+). The protein operates within metabolic intermediate biosynthesis; chorismate biosynthesis; chorismate from D-erythrose 4-phosphate and phosphoenolpyruvate: step 4/7. Involved in the biosynthesis of the chorismate, which leads to the biosynthesis of aromatic amino acids. Catalyzes the reversible NADPH linked reduction of 3-dehydroshikimate (DHSA) to yield shikimate (SA). The sequence is that of Shikimate dehydrogenase (NADP(+)) from Cupriavidus pinatubonensis (strain JMP 134 / LMG 1197) (Cupriavidus necator (strain JMP 134)).